The sequence spans 446 residues: Phosphoglucosamine mutase (446 aa).

The active-site Phosphoserine intermediate is the S103. Mg(2+)-binding residues include S103, D242, D244, and D246. S103 is subject to Phosphoserine.

The protein belongs to the phosphohexose mutase family. The cofactor is Mg(2+). Activated by phosphorylation.

It catalyses the reaction alpha-D-glucosamine 1-phosphate = D-glucosamine 6-phosphate. Functionally, catalyzes the conversion of glucosamine-6-phosphate to glucosamine-1-phosphate. This is Phosphoglucosamine mutase from Vibrio vulnificus (strain CMCP6).